A 491-amino-acid chain; its full sequence is Anhydromuropeptide permease (491 aa).

The Cytoplasmic portion of the chain corresponds to Met-1–Gln-11. Residues Pro-12–Ser-32 traverse the membrane as a helical segment. The Periplasmic segment spans residues Gly-33 to Lys-47. A helical membrane pass occupies residues Thr-48 to Phe-61. The Cytoplasmic segment spans residues Lys-62–Arg-81. Residues Gly-82 to Thr-105 form a helical membrane-spanning segment. Position 106 (Gln-106) is a topological domain, periplasmic. Residues Leu-107–Gln-124 form a helical membrane-spanning segment. At Asp-125–Arg-221 the chain is on the cytoplasmic side. A helical membrane pass occupies residues Asn-222–Phe-240. Topologically, residues Ala-241–Asn-264 are periplasmic. Residues Lys-265–Gln-284 form a helical membrane-spanning segment. Residues Arg-285 to Ser-287 lie on the Cytoplasmic side of the membrane. A helical membrane pass occupies residues Leu-288 to Asn-303. At Ala-304–Asn-327 the chain is on the periplasmic side. A helical membrane pass occupies residues Leu-328 to Asn-346. Topologically, residues Lys-347–Tyr-421 are cytoplasmic. A helical transmembrane segment spans residues Pro-422–Leu-453. Residues Thr-454–Ser-457 lie on the Periplasmic side of the membrane. The helical transmembrane segment at Phe-458–Leu-485 threads the bilayer. Residues Arg-486–Thr-491 lie on the Cytoplasmic side of the membrane.

This sequence belongs to the major facilitator superfamily.

It localises to the cell inner membrane. Functionally, permease involved in cell wall peptidoglycan recycling. Transports, from the periplasm into the cytoplasm, the disaccharide N-acetylglucosaminyl-beta-1,4-anhydro-N-acetylmuramic acid (GlcNAc-anhMurNAc) and GlcNAc-anhMurNAc-peptides. Transport is dependent on the proton motive force. The polypeptide is Anhydromuropeptide permease (ampG) (Escherichia coli O157:H7).